Here is a 100-residue protein sequence, read N- to C-terminus: Large ribosomal subunit protein bL21 (100 aa).

The protein belongs to the bacterial ribosomal protein bL21 family. As to quaternary structure, part of the 50S ribosomal subunit. Contacts protein L20.

This protein binds to 23S rRNA in the presence of protein L20. This Paramagnetospirillum magneticum (strain ATCC 700264 / AMB-1) (Magnetospirillum magneticum) protein is Large ribosomal subunit protein bL21.